Reading from the N-terminus, the 123-residue chain is Ribosome-binding factor A (123 aa).

It belongs to the RbfA family. As to quaternary structure, monomer. Binds 30S ribosomal subunits, but not 50S ribosomal subunits or 70S ribosomes.

It localises to the cytoplasm. Functionally, one of several proteins that assist in the late maturation steps of the functional core of the 30S ribosomal subunit. Associates with free 30S ribosomal subunits (but not with 30S subunits that are part of 70S ribosomes or polysomes). Required for efficient processing of 16S rRNA. May interact with the 5'-terminal helix region of 16S rRNA. This is Ribosome-binding factor A from Trichlorobacter lovleyi (strain ATCC BAA-1151 / DSM 17278 / SZ) (Geobacter lovleyi).